The chain runs to 317 residues: Ribosomal protein L11 methyltransferase (317 aa).

Residues threonine 158, glycine 179, aspartate 201, and asparagine 244 each contribute to the S-adenosyl-L-methionine site.

Belongs to the methyltransferase superfamily. PrmA family.

The protein localises to the cytoplasm. The catalysed reaction is L-lysyl-[protein] + 3 S-adenosyl-L-methionine = N(6),N(6),N(6)-trimethyl-L-lysyl-[protein] + 3 S-adenosyl-L-homocysteine + 3 H(+). Its function is as follows. Methylates ribosomal protein L11. This Lactococcus lactis subsp. cremoris (strain MG1363) protein is Ribosomal protein L11 methyltransferase.